The primary structure comprises 88 residues: Small ribosomal subunit protein bS18 (88 aa).

The tract at residues 1–22 (MSTKNAKPKKEAQRRPSRKAKV) is disordered.

Belongs to the bacterial ribosomal protein bS18 family. In terms of assembly, part of the 30S ribosomal subunit. Forms a tight heterodimer with protein bS6.

Binds as a heterodimer with protein bS6 to the central domain of the 16S rRNA, where it helps stabilize the platform of the 30S subunit. This Thermus thermophilus (strain ATCC BAA-163 / DSM 7039 / HB27) protein is Small ribosomal subunit protein bS18 (rpsR).